We begin with the raw amino-acid sequence, 513 residues long: Probable WRKY transcription factor 3 (513 aa).

Residues 1-11 (MAEKEEKEPSK) show a composition bias toward basic and acidic residues. Disordered regions lie at residues 1–26 (MAEK…ISLP), 175–281 (NVHM…PACP), and 297–394 (IIYK…VASS). Positions 179–201 (QQSQQSEYPSSTQQQQQQQQQAS) are enriched in low complexity. Positions 202–228 (LTEIPSFSSAPRSQIRASVQETSQGQR) are enriched in polar residues. The segment covering 229-240 (ETSEISVFEHRS) has biased composition (basic and acidic residues). A DNA-binding region (WRKY 1) is located at residues 244–308 (NADKPADDGY…YKGQHNHELP (65 aa)). Composition is skewed to polar residues over residues 311–335 (RGNN…SSLN) and 343–355 (TSQV…MSEA). The segment covering 368–387 (VGERHEDEPDPKRRNTEVRV) has biased composition (basic and acidic residues). Positions 409-474 (SEVDLLDDGY…YEGKHNHDVP (66 aa)) form a DNA-binding region, WRKY 2.

As to expression, in young, mature and senescent leaves.

Its subcellular location is the nucleus. Functionally, transcription factor. Interacts specifically with the W box (5'-(T)TGAC[CT]-3'), a frequently occurring elicitor-responsive cis-acting element. The sequence is that of Probable WRKY transcription factor 3 (WRKY3) from Arabidopsis thaliana (Mouse-ear cress).